We begin with the raw amino-acid sequence, 96 residues long: Large ribosomal subunit protein bL27 (96 aa).

The propeptide occupies methionine 1–phenylalanine 9.

Belongs to the bacterial ribosomal protein bL27 family. The N-terminus is cleaved by ribosomal processing cysteine protease Prp.

In Geobacillus kaustophilus (strain HTA426), this protein is Large ribosomal subunit protein bL27.